We begin with the raw amino-acid sequence, 457 residues long: uncharacterized protein (457 aa).

One can recognise a TRAM domain in the interval 5-63 (PVKKNDVIEVEIIDLTHEGLGVAKVDHYPLFIENALPGEKLEIKVLKTGKSFGYGKVLT). Residues Gln-287, Tyr-316, Glu-337, and Asp-385 each contribute to the S-adenosyl-L-methionine site. The active-site Nucleophile is the Cys-412.

This sequence belongs to the class I-like SAM-binding methyltransferase superfamily. RNA M5U methyltransferase family.

This is an uncharacterized protein from Enterococcus faecalis (strain ATCC 700802 / V583).